A 393-amino-acid chain; its full sequence is Chalcone synthase 3 (393 aa).

Cys-166 is a catalytic residue.

This sequence belongs to the thiolase-like superfamily. Chalcone/stilbene synthases family.

It carries out the reaction (E)-4-coumaroyl-CoA + 3 malonyl-CoA + 3 H(+) = 2',4,4',6'-tetrahydroxychalcone + 3 CO2 + 4 CoA. The protein operates within secondary metabolite biosynthesis; flavonoid biosynthesis. Functionally, the primary product of this enzyme is 4,2',4',6'-tetrahydroxychalcone (also termed naringenin-chalcone or chalcone) which can under specific conditions spontaneously isomerize into naringenin. This Ruta graveolens (Common rue) protein is Chalcone synthase 3 (CHS3).